A 357-amino-acid chain; its full sequence is Heat-inducible transcription repressor HrcA (357 aa).

This sequence belongs to the HrcA family.

Functionally, negative regulator of class I heat shock genes (grpE-dnaK-dnaJ and groELS operons). Prevents heat-shock induction of these operons. The protein is Heat-inducible transcription repressor HrcA of Chlorobium phaeobacteroides (strain DSM 266 / SMG 266 / 2430).